The chain runs to 216 residues: HTH-type transcriptional regulator EthR (216 aa).

The span at 1–10 (MTTSAASQAS) shows a compositional bias: polar residues. Residues 1 to 24 (MTTSAASQASLPRGRRTARPSGDD) are disordered. Residues 23 to 83 (DDRELAILAT…TLLDRVVNQA (61 aa)) enclose the HTH tetR-type domain. Positions 46–65 (SVDDLAKGAGISRPTFYFYF) form a DNA-binding region, H-T-H motif.

In terms of assembly, homodimer.

Functionally, involved in the repression of the monooxygenase EthA which is responsible of the formation of the active metabolite of ethionamide (ETH). The sequence is that of HTH-type transcriptional regulator EthR (ethR) from Mycobacterium bovis (strain ATCC BAA-935 / AF2122/97).